Consider the following 490-residue polypeptide: Adenylosuccinate synthetase 1, chloroplastic (490 aa).

Residues 1–47 (MSLSTLSHPAAAAAAATGSGKSHFRTAPAAQSVRFPKARPPVPAAVS) constitute a chloroplast transit peptide. The tract at residues 14-36 (AAATGSGKSHFRTAPAAQSVRFP) is disordered. GTP-binding positions include 77 to 83 (GDEGKGK) and 105 to 107 (GHT). The active-site Proton acceptor is the Asp78. 2 residues coordinate Mg(2+): Asp78 and Gly105. IMP contacts are provided by residues 78–81 (DEGK), 103–106 (NAGH), Thr195, Arg209, Gln289, Thr304, and Arg368. Catalysis depends on His106, which acts as the Proton donor. 364–370 (TTTGRPR) contacts substrate. GTP-binding positions include Arg370, 396–398 (KLD), and 479–481 (GVG).

The protein belongs to the adenylosuccinate synthetase family. Homodimer. The cofactor is Mg(2+).

The protein resides in the plastid. It localises to the chloroplast. It catalyses the reaction IMP + L-aspartate + GTP = N(6)-(1,2-dicarboxyethyl)-AMP + GDP + phosphate + 2 H(+). It functions in the pathway purine metabolism; AMP biosynthesis via de novo pathway; AMP from IMP: step 1/2. Plays an important role in the de novo pathway and in the salvage pathway of purine nucleotide biosynthesis. Catalyzes the first committed step in the biosynthesis of AMP from IMP. This is Adenylosuccinate synthetase 1, chloroplastic from Sorghum bicolor (Sorghum).